The following is a 323-amino-acid chain: Ferrochelatase (323 aa).

The Fe cation site is built by histidine 196 and glutamate 277.

The protein belongs to the ferrochelatase family.

It localises to the cytoplasm. It catalyses the reaction heme b + 2 H(+) = protoporphyrin IX + Fe(2+). The protein operates within porphyrin-containing compound metabolism; protoheme biosynthesis; protoheme from protoporphyrin-IX: step 1/1. Catalyzes the ferrous insertion into protoporphyrin IX. The polypeptide is Ferrochelatase (Haemophilus influenzae (strain ATCC 51907 / DSM 11121 / KW20 / Rd)).